The primary structure comprises 744 residues: 3-isopropylmalate dehydratase (744 aa).

Positions 341, 401, and 404 each coordinate [4Fe-4S] cluster.

Belongs to the aconitase/IPM isomerase family. Monomer. [4Fe-4S] cluster is required as a cofactor.

It carries out the reaction (2R,3S)-3-isopropylmalate = (2S)-2-isopropylmalate. It functions in the pathway amino-acid biosynthesis; L-leucine biosynthesis; L-leucine from 3-methyl-2-oxobutanoate: step 2/4. Functionally, catalyzes the isomerization between 2-isopropylmalate and 3-isopropylmalate, via the formation of 2-isopropylmaleate. The polypeptide is 3-isopropylmalate dehydratase (leu1) (Phycomyces blakesleeanus (strain ATCC 8743b / DSM 1359 / FGSC 10004 / NBRC 33097 / NRRL 1555)).